A 179-amino-acid chain; its full sequence is NADH dehydrogenase [ubiquinone] 1 beta subcomplex subunit 9 (179 aa).

N-acetylalanine is present on alanine 2. Serine 85 is modified (phosphoserine). The disordered stretch occupies residues glutamine 139–glutamine 160.

This sequence belongs to the complex I LYR family. As to quaternary structure, mammalian complex I is composed of 45 different subunits.

Its subcellular location is the mitochondrion inner membrane. In terms of biological role, accessory subunit of the mitochondrial membrane respiratory chain NADH dehydrogenase (Complex I), that is believed to be not involved in catalysis. Complex I functions in the transfer of electrons from NADH to the respiratory chain. The immediate electron acceptor for the enzyme is believed to be ubiquinone. This chain is NADH dehydrogenase [ubiquinone] 1 beta subcomplex subunit 9 (NDUFB9), found in Bos taurus (Bovine).